Consider the following 76-residue polypeptide: Kappa-actitoxin-Avd4n (76 aa).

Residues 1 to 19 (MNKAFFLCLVVLCAAVVFA) form the signal peptide. A propeptide spanning residues 20 to 31 (AEDLQKGKHAPF) is cleaved from the precursor. 2 cysteine pairs are disulfide-bonded: Cys37-Cys72 and Cys39-Cys65.

Belongs to the sea anemone type 3 (BDS) potassium channel toxin family. Lacks the conventional Cys residue at position 55. Thus, only 2 disulfide are possible present. Experimental results show no expression in the ectodermal tissue from the distal and proximal tentacles, body wall, and oral disk. Since paralogs are expressed in this tissue, an expression of this toxin in this tissue is probable. The negative results could be explained by the very low abundance of EST sequences.

The protein resides in the secreted. It is found in the nematocyst. Functionally, blocks Kv3 voltage-gated potassium channels. Reduces blood pressure. This is Kappa-actitoxin-Avd4n from Anemonia viridis (Snakelocks anemone).